The following is a 270-amino-acid chain: MSDRSPATENPWQQLRRLTPARIALGRAGASLPTAAHLAFQFAHAQARDAVHLPFEPAALQDGLRRRGLDGLLLRSAARDRDTYLQRPDLGRRLRPECATRLRDWHAEHGGGRDLAIVVADGLSALAVQRHALPLLDCLLERLPAEGWSLAPISLVEQGRVAVADEIGELLGARMTVILIGERPGLSSPDSLGLYFTFAPRVGLTDAARNCISNVRPEGLSYAMAAHKLLYLMREACRRRLSGVELKDEAEVARLDGAGSGPGNFLLGEG.

Positions 161, 182, and 211 each coordinate adenosylcob(III)alamin.

Belongs to the EutC family. In terms of assembly, the basic unit is a heterodimer which dimerizes to form tetramers. The heterotetramers trimerize; 6 large subunits form a core ring with 6 small subunits projecting outwards. Requires adenosylcob(III)alamin as cofactor.

It localises to the bacterial microcompartment. It catalyses the reaction ethanolamine = acetaldehyde + NH4(+). The protein operates within amine and polyamine degradation; ethanolamine degradation. In terms of biological role, catalyzes the deamination of various vicinal amino-alcohols to oxo compounds. Allows this organism to utilize ethanolamine as the sole source of nitrogen and carbon in the presence of external vitamin B12. In Azotobacter vinelandii (strain DJ / ATCC BAA-1303), this protein is Ethanolamine ammonia-lyase small subunit.